A 62-amino-acid chain; its full sequence is Calmodulin regulator protein PCP4 (62 aa).

Positions 1–39 (MSERQSAGATNGKDKTSGDNDGQKKVQEEFDIDMDAPET) are disordered. Over residues 12-28 (GKDKTSGDNDGQKKVQE) the composition is skewed to basic and acidic residues. Positions 28 to 40 (EEFDIDMDAPETE) are acidic; binds calcium and is required for modulating the calcium-binding kinetics of calmodulin. Residues 39 to 62 (TERAAVAIQSQFRKFQKKKAGSQS) form the IQ domain.

This sequence belongs to the PCP4 family. In terms of assembly, binds to both calcium-free and calcium-bound calmodulin. The affinity for the calcium-bound form is 50-fold greater.

Functionally, functions as a modulator of calcium-binding by calmodulin. Thereby, regulates calmodulin activity and the different processes it controls. For instance, may play a role in neuronal differentiation through activation of calmodulin-dependent kinase signaling pathways. The sequence is that of Calmodulin regulator protein PCP4 from Mus musculus (Mouse).